The primary structure comprises 212 residues: Methylthioribulose-1-phosphate dehydratase (212 aa).

Zn(2+) contacts are provided by His98 and His100.

This sequence belongs to the aldolase class II family. MtnB subfamily. Zn(2+) is required as a cofactor.

It carries out the reaction 5-(methylsulfanyl)-D-ribulose 1-phosphate = 5-methylsulfanyl-2,3-dioxopentyl phosphate + H2O. The protein operates within amino-acid biosynthesis; L-methionine biosynthesis via salvage pathway; L-methionine from S-methyl-5-thio-alpha-D-ribose 1-phosphate: step 2/6. Catalyzes the dehydration of methylthioribulose-1-phosphate (MTRu-1-P) into 2,3-diketo-5-methylthiopentyl-1-phosphate (DK-MTP-1-P). The chain is Methylthioribulose-1-phosphate dehydratase from Picosynechococcus sp. (strain ATCC 27264 / PCC 7002 / PR-6) (Agmenellum quadruplicatum).